Reading from the N-terminus, the 453-residue chain is uncharacterized protein (453 aa).

Disordered stretches follow at residues 15-42 (LKRK…SETM) and 425-453 (TNEI…RHAK). Residues 425–437 (TNEISSSNNSGTA) show a composition bias toward polar residues. The span at 443–453 (QNRKRNRRHAK) shows a compositional bias: basic residues.

This is an uncharacterized protein from Caenorhabditis elegans.